The primary structure comprises 708 residues: Exocyst complex component 5 (708 aa).

Residue Ala-2 is modified to N-acetylalanine. Residues 40-101 are a coiled coil; that stretch reads KRLLEEFVNH…AFQHFQELDE (62 aa). Phosphothreonine occurs at positions 122, 395, and 405. Position 412 is a phosphoserine (Ser-412).

This sequence belongs to the SEC10 family. In terms of assembly, the exocyst complex is composed of EXOC1, EXOC2, EXOC3, EXOC4, EXOC5, EXOC6, EXOC7 and EXOC8. Interacts with EXOC3L1.

Its subcellular location is the cytoplasm. The protein localises to the midbody. Component of the exocyst complex involved in the docking of exocytic vesicles with fusion sites on the plasma membrane. This chain is Exocyst complex component 5 (Exoc5), found in Mus musculus (Mouse).